Reading from the N-terminus, the 382-residue chain is uncharacterized protein (382 aa).

Helical transmembrane passes span 8 to 28, 45 to 65, 75 to 95, 102 to 122, 131 to 151, 157 to 177, 204 to 224, 231 to 251, 270 to 290, 291 to 311, 325 to 345, and 349 to 369; these read VMLL…LNTL, MVSS…GYLI, YLAS…VGFW, FIAG…LMCS, LLAA…LLVS, LLHV…PLLF, LGVN…GLMP, GMAN…GILG, VQVF…AMAP, ALFI…AWAC, ALLL…AMLM, and SDNL…LMLL.

It belongs to the major facilitator superfamily. YcaD (TC 2.A.1.26) family.

The protein resides in the cell inner membrane. This is an uncharacterized protein from Salmonella newport (strain SL254).